An 868-amino-acid chain; its full sequence is uncharacterized protein (868 aa).

It is found in the cytoplasm. The protein resides in the nucleus. This is an uncharacterized protein from Schizosaccharomyces pombe (strain 972 / ATCC 24843) (Fission yeast).